A 339-amino-acid chain; its full sequence is D-erythrose-4-phosphate dehydrogenase (339 aa).

Residue 11–12 (RI) coordinates NAD(+). Substrate is bound by residues 153–155 (SCT), R199, 212–213 (TK), and R235. C154 serves as the catalytic Nucleophile. NAD(+) is bound at residue N317.

The protein belongs to the glyceraldehyde-3-phosphate dehydrogenase family. Epd subfamily. As to quaternary structure, homotetramer.

The protein localises to the cytoplasm. The enzyme catalyses D-erythrose 4-phosphate + NAD(+) + H2O = 4-phospho-D-erythronate + NADH + 2 H(+). The protein operates within cofactor biosynthesis; pyridoxine 5'-phosphate biosynthesis; pyridoxine 5'-phosphate from D-erythrose 4-phosphate: step 1/5. Catalyzes the NAD-dependent conversion of D-erythrose 4-phosphate to 4-phosphoerythronate. This chain is D-erythrose-4-phosphate dehydrogenase, found in Shewanella halifaxensis (strain HAW-EB4).